The chain runs to 433 residues: Adenylosuccinate synthetase (433 aa).

Residues 11-17 (GDEGKGK) and 39-41 (GHT) each bind GTP. D12 functions as the Proton acceptor in the catalytic mechanism. Positions 12 and 39 each coordinate Mg(2+). IMP-binding positions include 12–15 (DEGK), 37–40 (NAGH), T134, R148, N230, T245, and R309. The Proton donor role is filled by H40. Substrate is bound at residue 305 to 311 (VTTGRKR). GTP-binding positions include R311, 337 to 339 (KLD), and 419 to 421 (GTG).

This sequence belongs to the adenylosuccinate synthetase family. In terms of assembly, homodimer. Requires Mg(2+) as cofactor.

Its subcellular location is the cytoplasm. The catalysed reaction is IMP + L-aspartate + GTP = N(6)-(1,2-dicarboxyethyl)-AMP + GDP + phosphate + 2 H(+). The protein operates within purine metabolism; AMP biosynthesis via de novo pathway; AMP from IMP: step 1/2. Functionally, plays an important role in the de novo pathway and in the salvage pathway of purine nucleotide biosynthesis. Catalyzes the first committed step in the biosynthesis of AMP from IMP. The polypeptide is Adenylosuccinate synthetase (Saccharomyces cerevisiae (strain YJM789) (Baker's yeast)).